The primary structure comprises 1377 residues: DNA-directed RNA polymerase subunit beta' (1377 aa).

The Zn(2+) site is built by Cys-60, Cys-62, Cys-75, and Cys-78. The Mg(2+) site is built by Asp-449, Asp-451, and Asp-453. Zn(2+)-binding residues include Cys-777, Cys-851, Cys-858, and Cys-861.

Belongs to the RNA polymerase beta' chain family. The RNAP catalytic core consists of 2 alpha, 1 beta, 1 beta' and 1 omega subunit. When a sigma factor is associated with the core the holoenzyme is formed, which can initiate transcription. Mg(2+) serves as cofactor. Zn(2+) is required as a cofactor.

It carries out the reaction RNA(n) + a ribonucleoside 5'-triphosphate = RNA(n+1) + diphosphate. Functionally, DNA-dependent RNA polymerase catalyzes the transcription of DNA into RNA using the four ribonucleoside triphosphates as substrates. This chain is DNA-directed RNA polymerase subunit beta', found in Borrelia recurrentis (strain A1).